We begin with the raw amino-acid sequence, 62 residues long: UPF0291 protein CLM_2971 (62 aa).

The protein belongs to the UPF0291 family.

The protein localises to the cytoplasm. The protein is UPF0291 protein CLM_2971 of Clostridium botulinum (strain Kyoto / Type A2).